A 77-amino-acid polypeptide reads, in one-letter code: U8-lycotoxin-Ls1w (77 aa).

Residues 1-20 (MKLIIFTGLVLFAIVSLIEA) form the signal peptide. The propeptide occupies 21-26 (QAENEK).

It belongs to the neurotoxin 19 (CSTX) family. 08 (U8-Lctx) subfamily. Post-translationally, contains 4 disulfide bonds. Expressed by the venom gland.

It is found in the secreted. This chain is U8-lycotoxin-Ls1w, found in Lycosa singoriensis (Wolf spider).